The sequence spans 293 residues: Homoserine kinase (293 aa).

83–93 (PITRGMGSSSA) serves as a coordination point for ATP.

The protein belongs to the GHMP kinase family. Homoserine kinase subfamily.

The protein resides in the cytoplasm. The enzyme catalyses L-homoserine + ATP = O-phospho-L-homoserine + ADP + H(+). Its pathway is amino-acid biosynthesis; L-threonine biosynthesis; L-threonine from L-aspartate: step 4/5. In terms of biological role, catalyzes the ATP-dependent phosphorylation of L-homoserine to L-homoserine phosphate. This Helicobacter pylori (strain J99 / ATCC 700824) (Campylobacter pylori J99) protein is Homoserine kinase.